A 126-amino-acid chain; its full sequence is uncharacterized protein (126 aa).

The interval M1 to R46 is disordered.

The protein localises to the cytoplasm. The protein resides in the cytoskeleton. Its subcellular location is the cilium basal body. This is an uncharacterized protein from Bos taurus (Bovine).